The primary structure comprises 61 residues: Small ribosomal subunit protein uS14 (61 aa).

4 residues coordinate Zn(2+): Cys24, Cys27, Cys40, and Cys43.

Belongs to the universal ribosomal protein uS14 family. Zinc-binding uS14 subfamily. Part of the 30S ribosomal subunit. Contacts proteins S3 and S10. Requires Zn(2+) as cofactor.

In terms of biological role, binds 16S rRNA, required for the assembly of 30S particles and may also be responsible for determining the conformation of the 16S rRNA at the A site. In Thermodesulfovibrio yellowstonii (strain ATCC 51303 / DSM 11347 / YP87), this protein is Small ribosomal subunit protein uS14.